The sequence spans 184 residues: MKNVTDSFLSLGPWPSAGSFGFNTDIFATNPINLSVVLGVLIFFGKGVLSDLLDNRKQRILNTIRNSEELRGGAIEQLEKARARLRKIETEAEQFRVNGYSEIEREKLNLIQSTYKTLEQLENYKNETIRFEQQRALNQVRQRVFQQALQRALGTLNSCLNNELHLRTISANIGMLGTMKEITD.

The chain crosses the membrane as a helical span at residues 27–49 (FATNPINLSVVLGVLIFFGKGVL).

This sequence belongs to the ATPase B chain family. F-type ATPases have 2 components, F(1) - the catalytic core - and F(0) - the membrane proton channel. F(1) has five subunits: alpha(3), beta(3), gamma(1), delta(1), epsilon(1). F(0) has four main subunits: a(1), b(1), b'(1) and c(10-14). The alpha and beta chains form an alternating ring which encloses part of the gamma chain. F(1) is attached to F(0) by a central stalk formed by the gamma and epsilon chains, while a peripheral stalk is formed by the delta, b and b' chains.

The protein resides in the plastid. It localises to the chloroplast thylakoid membrane. Its function is as follows. F(1)F(0) ATP synthase produces ATP from ADP in the presence of a proton or sodium gradient. F-type ATPases consist of two structural domains, F(1) containing the extramembraneous catalytic core and F(0) containing the membrane proton channel, linked together by a central stalk and a peripheral stalk. During catalysis, ATP synthesis in the catalytic domain of F(1) is coupled via a rotary mechanism of the central stalk subunits to proton translocation. In terms of biological role, component of the F(0) channel, it forms part of the peripheral stalk, linking F(1) to F(0). This Ipomoea purpurea (Common morning glory) protein is ATP synthase subunit b, chloroplastic.